The chain runs to 684 residues: Fidgetin-like protein 2 (684 aa).

The span at 27 to 41 shows a compositional bias: polar residues; sequence PEQHLDVSSTTSSPA. Disordered regions lie at residues 27-48, 99-179, and 292-403; these read PEQH…ELYS, PGAF…PHSS, and LDEE…SDPM. The span at 160–179 shows a compositional bias: low complexity; that stretch reads SNLSDSGYSGSSSCSGPHSS. Ala-431 contributes to the ATP binding site.

This sequence belongs to the AAA ATPase family. Mg(2+) is required as a cofactor. Highly expressed in vascular endothelial cells and neuronal cells.

The protein resides in the cytoplasm. Its subcellular location is the cell cortex. The enzyme catalyses ATP + H2O = ADP + phosphate + H(+). In terms of biological role, microtubule-severing enzyme that negatively regulates cell migration and wound healing. In migrating cells, targets dynamic microtubules (MTs) at the leading edge and severs them, thereby suppressing motility. Negative regulator of axon regeneration that suppresses axonal growth by selectively severing dynamic MTs in the distal axon shaft and growth cone. Contributes to proper cell branching during endothelial and neuronal development. The protein is Fidgetin-like protein 2 (fignl2) of Danio rerio (Zebrafish).